The chain runs to 71 residues: Small ribosomal subunit protein bS21 (71 aa).

The disordered stretch occupies residues 47 to 71 (RENATRAKRHAKRVARENARNTRLY). Basic and acidic residues predominate over residues 60–71 (VARENARNTRLY).

The protein belongs to the bacterial ribosomal protein bS21 family.

The protein is Small ribosomal subunit protein bS21 of Histophilus somni (strain 129Pt) (Haemophilus somnus).